We begin with the raw amino-acid sequence, 467 residues long: ATP synthase subunit beta, chloroplastic (467 aa).

149–156 (GGAGVGKT) is a binding site for ATP.

Belongs to the ATPase alpha/beta chains family. F-type ATPases have 2 components, CF(1) - the catalytic core - and CF(0) - the membrane proton channel. CF(1) has five subunits: alpha(3), beta(3), gamma(1), delta(1), epsilon(1). CF(0) has four main subunits: a(1), b(1), b'(1) and c(9-12).

The protein resides in the plastid. Its subcellular location is the chloroplast thylakoid membrane. It carries out the reaction ATP + H2O + 4 H(+)(in) = ADP + phosphate + 5 H(+)(out). Functionally, produces ATP from ADP in the presence of a proton gradient across the membrane. The catalytic sites are hosted primarily by the beta subunits. This chain is ATP synthase subunit beta, chloroplastic, found in Cyanidioschyzon merolae (strain NIES-3377 / 10D) (Unicellular red alga).